The chain runs to 187 residues: Peptide deformylase 1 (187 aa).

Residues Cys107 and His149 each coordinate Fe cation. Glu150 is an active-site residue. His153 provides a ligand contact to Fe cation.

The protein belongs to the polypeptide deformylase family. It depends on Fe(2+) as a cofactor.

It catalyses the reaction N-terminal N-formyl-L-methionyl-[peptide] + H2O = N-terminal L-methionyl-[peptide] + formate. In terms of biological role, removes the formyl group from the N-terminal Met of newly synthesized proteins. Requires at least a dipeptide for an efficient rate of reaction. N-terminal L-methionine is a prerequisite for activity but the enzyme has broad specificity at other positions. This is Peptide deformylase 1 from Nostoc sp. (strain PCC 7120 / SAG 25.82 / UTEX 2576).